The sequence spans 409 residues: Probable type I inositol 1,4,5-trisphosphate 5-phosphatase (409 aa).

This sequence belongs to the inositol 1,4,5-trisphosphate 5-phosphatase type I family.

The catalysed reaction is 1D-myo-inositol 1,4,5-trisphosphate + H2O = 1D-myo-inositol 1,4-bisphosphate + phosphate. It carries out the reaction 1D-myo-inositol 1,3,4,5-tetrakisphosphate + H2O = 1D-myo-inositol 1,3,4-trisphosphate + phosphate. The chain is Probable type I inositol 1,4,5-trisphosphate 5-phosphatase (ipp-5) from Caenorhabditis elegans.